The chain runs to 118 residues: Putative pterin-4-alpha-carbinolamine dehydratase (118 aa).

The protein belongs to the pterin-4-alpha-carbinolamine dehydratase family.

It catalyses the reaction (4aS,6R)-4a-hydroxy-L-erythro-5,6,7,8-tetrahydrobiopterin = (6R)-L-erythro-6,7-dihydrobiopterin + H2O. This Pseudomonas entomophila (strain L48) protein is Putative pterin-4-alpha-carbinolamine dehydratase.